A 159-amino-acid chain; its full sequence is 2-amino-4-hydroxy-6-hydroxymethyldihydropteridine pyrophosphokinase (159 aa).

This sequence belongs to the HPPK family. Monomer.

It catalyses the reaction 6-hydroxymethyl-7,8-dihydropterin + ATP = (7,8-dihydropterin-6-yl)methyl diphosphate + AMP + H(+). It functions in the pathway cofactor biosynthesis; tetrahydrofolate biosynthesis; 2-amino-4-hydroxy-6-hydroxymethyl-7,8-dihydropteridine diphosphate from 7,8-dihydroneopterin triphosphate: step 4/4. Its function is as follows. Catalyzes the transfer of pyrophosphate from adenosine triphosphate (ATP) to 6-hydroxymethyl-7,8-dihydropterin, an enzymatic step in folate biosynthesis pathway. This chain is 2-amino-4-hydroxy-6-hydroxymethyldihydropteridine pyrophosphokinase (folK), found in Escherichia coli (strain K12).